Here is a 715-residue protein sequence, read N- to C-terminus: Polyribonucleotide nucleotidyltransferase (715 aa).

The Mg(2+) site is built by Asp-495 and Asp-501. The KH domain maps to 562-621 (PRLLTLQIPPDMIGLVIGPGGKTVRGISEQYNVKVDISEEGLVTITAPNETNAKQARAAI). The region spanning 631–699 (GDVYLGRVTR…SKGRINLTRL (69 aa)) is the S1 motif domain.

Belongs to the polyribonucleotide nucleotidyltransferase family. Mg(2+) is required as a cofactor.

It localises to the cytoplasm. It carries out the reaction RNA(n+1) + phosphate = RNA(n) + a ribonucleoside 5'-diphosphate. Functionally, involved in mRNA degradation. Catalyzes the phosphorolysis of single-stranded polyribonucleotides processively in the 3'- to 5'-direction. This Thermosynechococcus vestitus (strain NIES-2133 / IAM M-273 / BP-1) protein is Polyribonucleotide nucleotidyltransferase.